Reading from the N-terminus, the 414-residue chain is Peptidoglycan beta-N-acetylmuramidase NamZ (414 aa).

The N-terminal stretch at 1–23 (MRKTIFAFLTGLMMFGTITAASA) is a signal peptide.

It belongs to the glycoside hydrolase 171 family. In terms of assembly, homodimer in solution.

Its subcellular location is the secreted. It carries out the reaction Hydrolysis of terminal, non-reducing N-acetylmuramic residues.. In terms of biological role, catalyzes the exo-lytic cleavage of beta-1,4-N-acetylmuramate (beta-1,4-MurNAc) from the non-reducing ends of peptidoglycan chains. Specifically hydrolyzes the natural, peptidoglycan-derived disaccharide MurNAc-GlcNAc and the artificial substrate para-nitrophenyl beta-N-acetylmuramic acid (pNP-MurNAc). Requires a MurNAc entity at the non-reducing end, and cannot cleave GlcNAc-MurNAc. Probably plays a role in cell wall turnover and recycling. This is Peptidoglycan beta-N-acetylmuramidase NamZ from Bacillus subtilis (strain 168).